We begin with the raw amino-acid sequence, 216 residues long: A-type ATP synthase subunit D (216 aa).

The protein belongs to the V-ATPase D subunit family. Has multiple subunits with at least A(3), B(3), C, D, E, F, H, I and proteolipid K(x). In terms of processing, the N-terminus is blocked.

It is found in the cell membrane. Functionally, component of the A-type ATP synthase that produces ATP from ADP in the presence of a proton gradient across the membrane. The polypeptide is A-type ATP synthase subunit D (Sulfurisphaera tokodaii (strain DSM 16993 / JCM 10545 / NBRC 100140 / 7) (Sulfolobus tokodaii)).